The following is a 129-amino-acid chain: Small ribosomal subunit protein uS11 (129 aa).

This sequence belongs to the universal ribosomal protein uS11 family. Part of the 30S ribosomal subunit. Interacts with proteins S7 and S18. Binds to IF-3.

In terms of biological role, located on the platform of the 30S subunit, it bridges several disparate RNA helices of the 16S rRNA. Forms part of the Shine-Dalgarno cleft in the 70S ribosome. This is Small ribosomal subunit protein uS11 from Mycoplasma mycoides subsp. mycoides SC (strain CCUG 32753 / NCTC 10114 / PG1).